A 487-amino-acid chain; its full sequence is Betaine aldehyde dehydrogenase (487 aa).

K(+)-binding residues include Ser26 and Asp93. 150–152 (GAW) contributes to the NAD(+) binding site. The active-site Charge relay system is the Lys162. NAD(+) contacts are provided by residues 176–179 (KPSE) and 229–232 (SVPT). Leu244 provides a ligand contact to K(+). Glu250 (proton acceptor) is an active-site residue. Residues Gly252, Cys284, and Glu384 each contribute to the NAD(+) site. Cys284 acts as the Nucleophile in catalysis. Cys284 carries the cysteine sulfenic acid (-SOH) modification. 2 residues coordinate K(+): Lys454 and Gly457. Glu461 serves as the catalytic Charge relay system.

This sequence belongs to the aldehyde dehydrogenase family. In terms of assembly, dimer of dimers. K(+) is required as a cofactor.

The catalysed reaction is betaine aldehyde + NAD(+) + H2O = glycine betaine + NADH + 2 H(+). Its pathway is amine and polyamine biosynthesis; betaine biosynthesis via choline pathway; betaine from betaine aldehyde: step 1/1. Its function is as follows. Involved in the biosynthesis of the osmoprotectant glycine betaine. Catalyzes the irreversible oxidation of betaine aldehyde to the corresponding acid. The chain is Betaine aldehyde dehydrogenase from Rhizobium johnstonii (strain DSM 114642 / LMG 32736 / 3841) (Rhizobium leguminosarum bv. viciae).